We begin with the raw amino-acid sequence, 349 residues long: 4-hydroxy-tetrahydrodipicolinate reductase 2, chloroplastic (349 aa).

Residues 1-53 constitute a chloroplast transit peptide; it reads MAANGLMAASSVFLHRPVHPHFSFSSRTNQMVPLGFKGRVSFIGNVKRCFPVV. NAD(+) contacts are provided by residues 81–86, 173–175, and 196–199; these read GCSGKM, GTT, and SPQM. The active-site Proton donor/acceptor is the His232. Residue Lys236 is the Proton donor of the active site. A (S)-2,3,4,5-tetrahydrodipicolinate-binding site is contributed by 241–242; sequence GT.

It belongs to the DapB family.

Its subcellular location is the plastid. The protein localises to the chloroplast. It carries out the reaction (S)-2,3,4,5-tetrahydrodipicolinate + NAD(+) + H2O = (2S,4S)-4-hydroxy-2,3,4,5-tetrahydrodipicolinate + NADH + H(+). The catalysed reaction is (S)-2,3,4,5-tetrahydrodipicolinate + NADP(+) + H2O = (2S,4S)-4-hydroxy-2,3,4,5-tetrahydrodipicolinate + NADPH + H(+). It functions in the pathway amino-acid biosynthesis; L-lysine biosynthesis via DAP pathway; (S)-tetrahydrodipicolinate from L-aspartate: step 4/4. Functionally, catalyzes the conversion of 4-hydroxy-tetrahydrodipicolinate (HTPA) to tetrahydrodipicolinate. The sequence is that of 4-hydroxy-tetrahydrodipicolinate reductase 2, chloroplastic (DAPB2) from Arabidopsis thaliana (Mouse-ear cress).